Here is a 319-residue protein sequence, read N- to C-terminus: Acetaldehyde dehydrogenase 1 (319 aa).

The active-site Acyl-thioester intermediate is C129. Residues 160-168 (SAGPGTRAN) and N287 each bind NAD(+).

It belongs to the acetaldehyde dehydrogenase family.

It catalyses the reaction acetaldehyde + NAD(+) + CoA = acetyl-CoA + NADH + H(+). In Burkholderia lata (strain ATCC 17760 / DSM 23089 / LMG 22485 / NCIMB 9086 / R18194 / 383), this protein is Acetaldehyde dehydrogenase 1.